The following is a 306-amino-acid chain: Diterpene cyclase eriG (306 aa).

The next 2 membrane-spanning stretches (helical) occupy residues 13 to 33 (IFFGFSWRDWSTTIIPGSIFA) and 43 to 63 (ATLVKNYLFLVTWLTPYIYFF). Asparagine 64 carries N-linked (GlcNAc...) asparagine glycosylation. 4 helical membrane passes run 115-135 (FLPETLCWIATVAFLCLTSYG), 161-181 (IAPATPTSDAWVYAVSVWAGL), 213-233 (LIITFFALPAACWVLSLAGIF), and 265-285 (MFYTYIFCLILAFCALDGLGL).

Belongs to the UbiA prenyltransferase family. Requires Mg(2+) as cofactor.

It is found in the membrane. The catalysed reaction is (2E,6E,10E)-geranylgeranyl diphosphate = (-)-cyatha-3,12-diene + diphosphate. It functions in the pathway secondary metabolite biosynthesis. Its activity is regulated as follows. EDTA completely blocks the reaction. Its function is as follows. Diterpene cyclase; part of the gene cluster that mediates the biosynthesis of erinacines, cyathane-xylosides that show unique biological activities, including leishmanicidal activity, stimulating activity for nerve growth-factor synthesis, and agonistic activity toward the kappa opioid receptor. Within the pathway, eriG acts as a diterpene cyclase that converts geranylgeranyl diphosphate (GGPP) into cyatha-3,12-diene. EriG is unable to use geranyl diphosphate (GPP) or farnesyl diphosphate (FPP) as substrates. The first step of the erinacines biosynthesis pathway is catalyzed by the geranylgeranyl diphosphate (GGPP) synthase eriE via conversion of farnesyl pyrophosphate and isopentyl pyrophosphate into geranylgeranyl pyrophosphate (GGPP). GGPP is then substrate of the diterpene cyclase eriG for the production of cyatha-3,12-diene. The cytochrome P450 monooxygenase eriI then hydroxylates cyatha-3,12-diene at C-14 of the seven-membered ring to produce erinacol, which is further hydroxylated at C-15 by the cytochrome P450 monooxygenase eriC to yield cyathadiol. The cytochrome P450 monooxygenase eriA then catalyzes C-11 hydroxylation in the presence of the short chain dehydrogenase/reductase (SDR) eriH, which leads to the production of cyathatriol. The acetyltransferase eriL converts cyathatriol into 11-O-acetyl-cyathatriol. The SDR eriH catalyzes further oxidation of 11-O-acetyl-cyathatriol into 1-O-acetylcyathin A3. Finally, the glycosyl transferase eriJ tranfers xylose from UDP-xylose onto C-14 of 11-O-acetyl-cyathatriol to form eracine Q. EriJ is also able to convert 11-O-acetyl-cyathatriol to eracine Q2 by using UDP-D-glucose as cosubstrate, but at a lower rate. In Hericium erinaceus (Lion's mane mushroom), this protein is Diterpene cyclase eriG.